Consider the following 533-residue polypeptide: Subtilisin-like protease 1 (533 aa).

A signal peptide spans Met1–Ala19. The propeptide occupies Ala20–His116. Residues Ser34–Val115 enclose the Inhibitor I9 domain. One can recognise a Peptidase S8 domain in the interval Ser126–Lys400. Catalysis depends on charge relay system residues Asp158 and His190. Residues Gly175–Met198 form a disordered region. Asn233 and Asn251 each carry an N-linked (GlcNAc...) asparagine glycan. Residues Asn282–Ser294 show a composition bias toward polar residues. The disordered stretch occupies residues Asn282 to Ser312. Residue Ser345 is the Charge relay system of the active site. The segment covering Thr378–Ile394 has biased composition (polar residues). Residues Thr378–Asp512 form a disordered region. The span at Asn405–Pro470 shows a compositional bias: pro residues. Positions Phe471–Pro487 are enriched in low complexity. Positions Ala488–Pro502 are enriched in pro residues.

Belongs to the peptidase S8 family.

It localises to the secreted. Functionally, secreted subtilisin-like serine protease with keratinolytic activity that contributes to pathogenicity. The protein is Subtilisin-like protease 1 (SUB1) of Arthroderma benhamiae (strain ATCC MYA-4681 / CBS 112371) (Trichophyton mentagrophytes).